The chain runs to 20 residues: Phospholipase A2 D5 (20 aa).

The cofactor is Ca(2+). Post-translationally, contains seven disulfide bonds. Expressed by the venom gland.

The protein resides in the secreted. It catalyses the reaction a 1,2-diacyl-sn-glycero-3-phosphocholine + H2O = a 1-acyl-sn-glycero-3-phosphocholine + a fatty acid + H(+). PLA2 catalyzes the calcium-dependent hydrolysis of the 2-acyl groups in 3-sn-phosphoglycerides. This is Phospholipase A2 D5 from Micrurus pyrrhocryptus (Coral snake).